Reading from the N-terminus, the 429-residue chain is Ribosomal RNA small subunit methyltransferase B (429 aa).

S-adenosyl-L-methionine-binding positions include 254–260, aspartate 277, aspartate 303, and aspartate 322; that span reads CAAPGGK. Residue cysteine 375 is the Nucleophile of the active site.

The protein belongs to the class I-like SAM-binding methyltransferase superfamily. RsmB/NOP family.

The protein localises to the cytoplasm. It catalyses the reaction cytidine(967) in 16S rRNA + S-adenosyl-L-methionine = 5-methylcytidine(967) in 16S rRNA + S-adenosyl-L-homocysteine + H(+). In terms of biological role, specifically methylates the cytosine at position 967 (m5C967) of 16S rRNA. In Shigella boydii serotype 18 (strain CDC 3083-94 / BS512), this protein is Ribosomal RNA small subunit methyltransferase B.